The chain runs to 495 residues: UDP-glycosyltransferase 73C13 (495 aa).

H24 (proton acceptor) is an active-site residue. H24 provides a ligand contact to an anthocyanidin. The active-site Charge relay is D129. Positions 356, 358, 373, 376, 377, 378, and 381 each coordinate UDP-alpha-D-glucose. A396 serves as a coordination point for an anthocyanidin. The UDP-alpha-D-glucose site is built by D397 and Q398.

The protein belongs to the UDP-glycosyltransferase family.

It carries out the reaction oleanolate + UDP-alpha-D-glucose = oleanolate 3-O-beta-D-glucoside + UDP + H(+). In terms of biological role, catalyzes the transfer of a glucose (Glc) moiety from UDP-Glc to the C-3 position of the oleanane sapogenins oleanolate and hederagenin, and to the C-28 carboxylic group of the lupane sapogenin betulinate. The monoglucosylated hederagenin 3-O-beta-D-glucoside is a feeding deterrent of the yellow-striped flea beetle (Phyllotreta nemorum). The protein is UDP-glycosyltransferase 73C13 of Barbarea vulgaris (Yellow rocket).